Consider the following 457-residue polypeptide: Siroheme synthase (457 aa).

The segment at 1–204 (MDHLPIFCQL…NDQKAITETT (204 aa)) is precorrin-2 dehydrogenase /sirohydrochlorin ferrochelatase. NAD(+) contacts are provided by residues 22-23 (DV) and 43-44 (LA). Serine 128 bears the Phosphoserine mark. Residues 216 to 457 (GEVVLVGAGP…RDKLNWFSNH (242 aa)) form a uroporphyrinogen-III C-methyltransferase region. Proline 225 is a binding site for S-adenosyl-L-methionine. The Proton acceptor role is filled by aspartate 248. The active-site Proton donor is lysine 270. Residues 301–303 (GGD), isoleucine 306, 331–332 (TA), methionine 382, and glycine 411 each bind S-adenosyl-L-methionine.

This sequence in the N-terminal section; belongs to the precorrin-2 dehydrogenase / sirohydrochlorin ferrochelatase family. In the C-terminal section; belongs to the precorrin methyltransferase family.

The enzyme catalyses uroporphyrinogen III + 2 S-adenosyl-L-methionine = precorrin-2 + 2 S-adenosyl-L-homocysteine + H(+). It catalyses the reaction precorrin-2 + NAD(+) = sirohydrochlorin + NADH + 2 H(+). The catalysed reaction is siroheme + 2 H(+) = sirohydrochlorin + Fe(2+). It participates in cofactor biosynthesis; adenosylcobalamin biosynthesis; precorrin-2 from uroporphyrinogen III: step 1/1. The protein operates within cofactor biosynthesis; adenosylcobalamin biosynthesis; sirohydrochlorin from precorrin-2: step 1/1. It functions in the pathway porphyrin-containing compound metabolism; siroheme biosynthesis; precorrin-2 from uroporphyrinogen III: step 1/1. Its pathway is porphyrin-containing compound metabolism; siroheme biosynthesis; siroheme from sirohydrochlorin: step 1/1. It participates in porphyrin-containing compound metabolism; siroheme biosynthesis; sirohydrochlorin from precorrin-2: step 1/1. Its function is as follows. Multifunctional enzyme that catalyzes the SAM-dependent methylations of uroporphyrinogen III at position C-2 and C-7 to form precorrin-2 via precorrin-1. Then it catalyzes the NAD-dependent ring dehydrogenation of precorrin-2 to yield sirohydrochlorin. Finally, it catalyzes the ferrochelation of sirohydrochlorin to yield siroheme. In Escherichia coli O17:K52:H18 (strain UMN026 / ExPEC), this protein is Siroheme synthase.